Reading from the N-terminus, the 368-residue chain is Glutamate 5-kinase (368 aa).

An ATP-binding site is contributed by K11. The substrate site is built by S51, D138, and N150. ATP is bound by residues 170 to 171 (TD) and 212 to 218 (TGGMATK). The PUA domain maps to 276-354 (AGEIIVDHGA…QQISQILGYE (79 aa)).

The protein belongs to the glutamate 5-kinase family.

It localises to the cytoplasm. The catalysed reaction is L-glutamate + ATP = L-glutamyl 5-phosphate + ADP. Its pathway is amino-acid biosynthesis; L-proline biosynthesis; L-glutamate 5-semialdehyde from L-glutamate: step 1/2. Functionally, catalyzes the transfer of a phosphate group to glutamate to form L-glutamate 5-phosphate. In Photorhabdus laumondii subsp. laumondii (strain DSM 15139 / CIP 105565 / TT01) (Photorhabdus luminescens subsp. laumondii), this protein is Glutamate 5-kinase.